The following is a 199-amino-acid chain: DnaJ homolog subfamily C member 5B (199 aa).

Residues Ser-14 and Ser-16 each carry the phosphoserine modification. The J domain occupies 19–84 (SLYEILGLHK…SKRNIYDKYG (66 aa)).

In terms of assembly, interacts with the chaperone complex consisting of HSC70 and SGTA. In terms of processing, palmitoylated.

Its subcellular location is the membrane. This Mus musculus (Mouse) protein is DnaJ homolog subfamily C member 5B (Dnajc5b).